The primary structure comprises 313 residues: Porphobilinogen deaminase (313 aa).

At Cys-242 the chain carries S-(dipyrrolylmethanemethyl)cysteine.

Belongs to the HMBS family. In terms of assembly, monomer. It depends on dipyrromethane as a cofactor.

It catalyses the reaction 4 porphobilinogen + H2O = hydroxymethylbilane + 4 NH4(+). Its pathway is porphyrin-containing compound metabolism; protoporphyrin-IX biosynthesis; coproporphyrinogen-III from 5-aminolevulinate: step 2/4. Functionally, tetrapolymerization of the monopyrrole PBG into the hydroxymethylbilane pre-uroporphyrinogen in several discrete steps. This Shigella flexneri protein is Porphobilinogen deaminase.